A 433-amino-acid chain; its full sequence is PHO85 cyclin-10 (433 aa).

The segment covering 1 to 10 (MDMTKNHTTD) has biased composition (basic and acidic residues). 2 disordered regions span residues 1 to 20 (MDMT…GDIR) and 51 to 81 (LTSE…TTDS). Residues 51–63 (LTSEWDQSRSNTP) show a composition bias toward polar residues.

The protein belongs to the cyclin family. PHO80 subfamily. As to quaternary structure, forms a cyclin-CDK complex with PHO85. Interacts with GSY2, independent of the presence of PHO85.

The protein localises to the cytoplasm. Its function is as follows. Cyclin partner of the cyclin-dependent kinase (CDK) PHO85. Together with cyclin PCL8, negatively controls glycogen accumulation under favorable growth conditions. The PCL10-PHO85 cyclin-CDK holoenzyme has glycogen synthase kinase activity and phosphorylates and negatively regulates glycogen synthase GSY2. Also has minor GLC8 kinase activity. This chain is PHO85 cyclin-10 (PCL10), found in Saccharomyces cerevisiae (strain ATCC 204508 / S288c) (Baker's yeast).